A 140-amino-acid polypeptide reads, in one-letter code: Endoribonuclease YbeY (140 aa).

Zn(2+) is bound by residues His-101, His-105, and His-111.

The protein belongs to the endoribonuclease YbeY family. Requires Zn(2+) as cofactor.

Its subcellular location is the cytoplasm. Functionally, single strand-specific metallo-endoribonuclease involved in late-stage 70S ribosome quality control and in maturation of the 3' terminus of the 16S rRNA. This is Endoribonuclease YbeY from Aliarcobacter butzleri (strain RM4018) (Arcobacter butzleri).